Here is a 64-residue protein sequence, read N- to C-terminus: Small ribosomal subunit protein eS17 (64 aa).

Belongs to the eukaryotic ribosomal protein eS17 family.

The sequence is that of Small ribosomal subunit protein eS17 from Methanosarcina acetivorans (strain ATCC 35395 / DSM 2834 / JCM 12185 / C2A).